The following is a 706-amino-acid chain: K(+)-insensitive pyrophosphate-energized proton pump (706 aa).

The next 5 helical transmembrane spans lie at 1–21, 62–82, 83–103, 129–149, and 164–184; these read MTAL…AIWA, VVIF…GFAI, GAIL…RANV, LLVA…LIHF, and VALG…GGIF. Substrate is bound at residue Lys186. The Mg(2+) site is built by Asp189, Asp193, Asn216, and Asp219. 6 helical membrane passes run 231–251, 263–283, 300–320, 330–350, 393–413, and 414–434; these read LFET…IFFG, TLPL…TFFV, IATG…LIGF, GLAL…IIWI, IVII…GIAI, and ATTT…FGPV. A Mg(2+)-binding site is contributed by Asp436. A run of 4 helical transmembrane segments spans residues 467–487, 516–536, 585–605, and 616–636; these read AVTK…LFAA, YVVV…AMGM, IIPS…IYAI, and AFSA…FVAI. Ca(2+) is bound by residues Asp646, Asp672, and Asp676. Lys679 provides a ligand contact to substrate. Residues 685–705 traverse the membrane as a helical segment; the sequence is AVNPMIKITNIVALLLLAILA.

This sequence belongs to the H(+)-translocating pyrophosphatase (TC 3.A.10) family. K(+)-insensitive subfamily. As to quaternary structure, homodimer. The cofactor is Mg(2+).

It localises to the cell inner membrane. It carries out the reaction diphosphate + H2O + H(+)(in) = 2 phosphate + 2 H(+)(out). Proton pump that utilizes the energy of pyrophosphate hydrolysis as the driving force for proton movement across the membrane. Generates a proton motive force. The chain is K(+)-insensitive pyrophosphate-energized proton pump from Rhodopseudomonas palustris (strain ATCC BAA-98 / CGA009).